Consider the following 576-residue polypeptide: Arginine--tRNA ligase (576 aa).

Residues 126–136 carry the 'HIGH' region motif; it reads ANPTGPMHIGH.

It belongs to the class-I aminoacyl-tRNA synthetase family. Monomer.

The protein resides in the cytoplasm. It carries out the reaction tRNA(Arg) + L-arginine + ATP = L-arginyl-tRNA(Arg) + AMP + diphosphate. This is Arginine--tRNA ligase (argS) from Rickettsia prowazekii (strain Madrid E).